The following is a 450-amino-acid chain: MRTLMSATKNNVYSVSQLNSEVRHILEGQIGKIWLNGEISNFSAPSSGHWYLTLKDAHSQVRCAMFKGRNQSVRFKPVNGQQVLIKGAISVYEPRGDYQLLLESMLPAGDGLLAQEFEALKLKLAAEGLFALETKRPIPTNIQRIGVITSATGAALRDILHVLARRDPSIEVVVYPTQVQGATASQLICQAIVTANQRMEVDVLLLTRGGGSLEDLWCFNSEHLAHAIYNSALPVVSAVGHEIDTTISDYVADVRAPTPSAGAELLSKDKGNKAEKLALLLSRLQQGMKHYQLQQYGRLTQLSHQLQRHEPQHKLQQFEQRFDEIQMRLENALQHKLSRLTLRHQQLHNRLQQRSPVNTLTLEKQRLGYLIERFNDASKDYFKQAESRVSQAAHNLDTVSPLATLSRGYSITSTNEHVIENANQLSNGDVIHTRLKQGSVTSTVTDVSTK.

It belongs to the XseA family. As to quaternary structure, heterooligomer composed of large and small subunits.

Its subcellular location is the cytoplasm. It carries out the reaction Exonucleolytic cleavage in either 5'- to 3'- or 3'- to 5'-direction to yield nucleoside 5'-phosphates.. In terms of biological role, bidirectionally degrades single-stranded DNA into large acid-insoluble oligonucleotides, which are then degraded further into small acid-soluble oligonucleotides. The protein is Exodeoxyribonuclease 7 large subunit of Shewanella frigidimarina (strain NCIMB 400).